The primary structure comprises 245 residues: MKIDILSIFPDMFSGVTGNSIIKKAIENERVAVEVTDFREYAEGKHHIVDDYPYGGGAGMLLKAQPIFDAVQAVKEKQPETKPRVILMDPAGKRFDQKMAEEFAEEEHLVFICGHYEGYDERIREHLVTDEVSIGDYILTGGEIGAMIVMDSVIRLLPGVLGNKDSAVTDSFSTGLLEHPHYTRPADFRGMKVPDILLSGNHAWIEEWRDKESLKRTYERRPDLLKNYPLTDKQKTWLKEWSDSK.

Residues glycine 114 and 134–139 (IGDYIL) each bind S-adenosyl-L-methionine.

This sequence belongs to the RNA methyltransferase TrmD family. As to quaternary structure, homodimer.

Its subcellular location is the cytoplasm. The enzyme catalyses guanosine(37) in tRNA + S-adenosyl-L-methionine = N(1)-methylguanosine(37) in tRNA + S-adenosyl-L-homocysteine + H(+). Functionally, specifically methylates guanosine-37 in various tRNAs. The polypeptide is tRNA (guanine-N(1)-)-methyltransferase (Listeria monocytogenes serotype 4b (strain CLIP80459)).